The primary structure comprises 529 residues: CTP synthase (529 aa).

The amidoligase domain stretch occupies residues 1–270 (MKYIVVTGGV…ADVVCSYLSL (270 aa)). Serine 12 serves as a coordination point for CTP. UTP is bound at residue serine 12. ATP-binding positions include 13 to 18 (GLGKGI) and aspartate 70. Aspartate 70 and glutamate 145 together coordinate Mg(2+). CTP is bound by residues 152–154 (DIE), 191–196 (KTKPTQ), and lysine 227. Residues 191–196 (KTKPTQ) and lysine 227 contribute to the UTP site. Position 243–245 (243–245 (KDA)) interacts with ATP. The 233-residue stretch at 293-525 (VAIVSKYGIE…VEACKKNKSS (233 aa)) folds into the Glutamine amidotransferase type-1 domain. Position 349 (glycine 349) interacts with L-glutamine. Residue cysteine 376 is the Nucleophile; for glutamine hydrolysis of the active site. Residues 377–380 (LGFQ), glutamate 400, and arginine 455 contribute to the L-glutamine site. Catalysis depends on residues histidine 498 and glutamate 500.

It belongs to the CTP synthase family. Homotetramer.

The catalysed reaction is UTP + L-glutamine + ATP + H2O = CTP + L-glutamate + ADP + phosphate + 2 H(+). It carries out the reaction L-glutamine + H2O = L-glutamate + NH4(+). The enzyme catalyses UTP + NH4(+) + ATP = CTP + ADP + phosphate + 2 H(+). Its pathway is pyrimidine metabolism; CTP biosynthesis via de novo pathway; CTP from UDP: step 2/2. With respect to regulation, allosterically activated by GTP, when glutamine is the substrate; GTP has no effect on the reaction when ammonia is the substrate. The allosteric effector GTP functions by stabilizing the protein conformation that binds the tetrahedral intermediate(s) formed during glutamine hydrolysis. Inhibited by the product CTP, via allosteric rather than competitive inhibition. Catalyzes the ATP-dependent amination of UTP to CTP with either L-glutamine or ammonia as the source of nitrogen. Regulates intracellular CTP levels through interactions with the four ribonucleotide triphosphates. This is CTP synthase from Methanoculleus marisnigri (strain ATCC 35101 / DSM 1498 / JR1).